Here is a 116-residue protein sequence, read N- to C-terminus: Non-specific lipid-transfer protein 10 (116 aa).

A signal peptide spans methionine 1–alanine 22. 4 cysteine pairs are disulfide-bonded: cysteine 26–cysteine 73, cysteine 36–cysteine 50, cysteine 51–cysteine 98, and cysteine 71–cysteine 112.

Belongs to the plant LTP family.

Functionally, plant non-specific lipid-transfer proteins transfer phospholipids as well as galactolipids across membranes. May play a role in wax or cutin deposition in the cell walls of expanding epidermal cells and certain secretory tissues. The protein is Non-specific lipid-transfer protein 10 (LTP10) of Arabidopsis thaliana (Mouse-ear cress).